The primary structure comprises 444 residues: CCA-adding enzyme (444 aa).

ATP contacts are provided by S57 and R60. CTP-binding residues include S57 and R60. Residues D69, D71, and D124 each contribute to the Mg(2+) site. 3 residues coordinate ATP: H147, K168, and Y177. 3 residues coordinate CTP: H147, K168, and Y177.

Belongs to the tRNA nucleotidyltransferase/poly(A) polymerase family. Archaeal CCA-adding enzyme subfamily. Homodimer. Requires Mg(2+) as cofactor.

The catalysed reaction is a tRNA precursor + 2 CTP + ATP = a tRNA with a 3' CCA end + 3 diphosphate. It catalyses the reaction a tRNA with a 3' CCA end + 2 CTP + ATP = a tRNA with a 3' CCACCA end + 3 diphosphate. Catalyzes the addition and repair of the essential 3'-terminal CCA sequence in tRNAs without using a nucleic acid template. Adds these three nucleotides in the order of C, C, and A to the tRNA nucleotide-73, using CTP and ATP as substrates and producing inorganic pyrophosphate. tRNA 3'-terminal CCA addition is required both for tRNA processing and repair. Also involved in tRNA surveillance by mediating tandem CCA addition to generate a CCACCA at the 3' terminus of unstable tRNAs. While stable tRNAs receive only 3'-terminal CCA, unstable tRNAs are marked with CCACCA and rapidly degraded. In Methanococcus maripaludis (strain C5 / ATCC BAA-1333), this protein is CCA-adding enzyme.